We begin with the raw amino-acid sequence, 564 residues long: MVDSSRDSCFKAGKFSAPGFRFHPTDEELVVYYLKRKICCKKLRVNAIGVVDVYKVDPSELPGLSMLKTGDRQWFFFTPRNRKYPNAARSSRGTATGYWKATGKDRVIEYNSRSVGLKKTLVFYRGRAPNGERTDWVMHEYTMDEEELGRCKNAKEYYALYKLYKKSGAGPKNGEQYGAPFQEEEWVDSDSEDADSVAVPDYPVVRYENGPCVDDTKFCNPVKLQLEDIEKLLNEIPDAPGVNQRQFDEFVGVPQGNSAEVIQSTLLNNSSGEYIDPRTNGMFLPNGQLYNRDSSFQSHLNSFEATSGMAPLLDNEKEEYIEMNDLLIPELGASSTEKSTEFLNHGEFGDVNEYDQLFNDISVFQGTSTDLSCLSNFTNNTSGQRQQLLYEQFQYQTPENQLNNYMHPSTTLNQFTDNMWFKDDQAALYVQPPQSSSGAFTSQSTGVMPESMNPTMSVNPQYKEGQNGGGTRSQFSSALWELLESIPSTPASACEGPLNQTFVRMSSFSRIRFNGTSVTSRKVTVAKKRISNRGFLLLSIMGALCAIFWVFKATVGVMGRPLLS.

An NAC domain is found at Ser16 to Lys166. Residues Val115–Lys172 mediate DNA binding. A helical transmembrane segment spans residues Phe535–Val555.

In terms of tissue distribution, expressed in roots, rosette leaves, shoot apex, stems and flowers.

It localises to the membrane. It is found in the nucleus. In terms of biological role, transcriptional activator activated by proteolytic cleavage through regulated intramembrane proteolysis (RIP). Transcriptional activator that promotes leaf senescence by up-regulating senescence-associated genes in response to developmental and stress-induced senescence signals. Functions in salt and oxidative stress-responsive signaling pathways. Binds to the promoter of NAC029/NAP and NAC059/ORS1 genes. In Arabidopsis thaliana (Mouse-ear cress), this protein is NAC domain-containing protein 16.